The sequence spans 74 residues: VICYRKYTNNVKTCPDGENVCYTKMWCDGFCTSRGKVVELGCAATCPIRKPGNEVKCCSTNKCNHPPKRKKRRP.

Cystine bridges form between cysteine 3–cysteine 21, cysteine 14–cysteine 42, cysteine 27–cysteine 31, cysteine 46–cysteine 57, and cysteine 58–cysteine 63.

It belongs to the three-finger toxin family. Long-chain subfamily. Type II alpha-neurotoxin sub-subfamily. As to expression, expressed by the venom gland.

It localises to the secreted. Binds with high affinity to muscular (alpha-1/CHRNA1) and neuronal (alpha-7/CHRNA7) nicotinic acetylcholine receptor (nAChR) and inhibits acetylcholine from binding to the receptor, thereby impairing neuromuscular and neuronal transmission. The sequence is that of Alpha-elapitoxin-Aa2d from Acanthophis antarcticus (Common death adder).